The following is a 2623-amino-acid chain: Immunoglobulin superfamily member 10 (2623 aa).

The first 28 residues, 1–28 (MKVKGRGITCLLVSFAVICLVATPGGKA), serve as a signal peptide directing secretion. The LRRNT domain occupies 29–56 (CPRRCACYMPTEVHCTFRYLTSIPDSIP). LRR repeat units lie at residues 58-79 (NVER…DFSG), 82-103 (KLEL…TFSD), 106-127 (ALQV…TFYG), 130-151 (SLTR…VFYG), 154-175 (FLRL…TFVS), and 186-207 (FIKF…MVSY). The LRRCT domain occupies 219–281 (NPWTCDCHLK…VSAAAFQCAK (63 aa)). N-linked (GlcNAc...) asparagine glycans are attached at residues Asn319 and Asn439. 2 Ig-like C2-type domains span residues 461 to 567 (PRAE…YRIT) and 571 to 661 (PLVE…FQVS). 2 disulfides stabilise this stretch: Cys497–Cys551 and Cys595–Cys645. The N-linked (GlcNAc...) asparagine glycan is linked to Asn627. Disordered regions lie at residues 668–692 (RPLE…HLKE) and 767–788 (AMPD…QLPN). 2 N-linked (GlcNAc...) asparagine glycosylation sites follow: Asn774 and Asn999. Disordered stretches follow at residues 1334–1376 (TQTE…AMTP) and 1434–1453 (STIA…TTTR). Residues 1335–1356 (QTERSRAQTIQREQEPQKKNRT) are compositionally biased toward basic and acidic residues. A compositionally biased stretch (polar residues) spans 1357-1373 (DPNISPDQSSGFTTPTA). Ig-like C2-type domains lie at 1648–1739 (PRIV…VTLS), 1745–1836 (PRIL…VKIQ), 1841–1933 (PPVI…VMLT), 1941–2034 (PRIE…VSLR), 2037–2135 (PAKI…VHLT), 2141–2229 (PRIR…YKLD), 2234–2331 (PPLI…LEVL), 2337–2427 (PTFR…VILE), 2432–2518 (PVIL…TLIT), and 2528–2623 (PRIT…IQVI). Disulfide bonds link Cys1670-Cys1723, Cys1767-Cys1820, and Cys1864-Cys1917. Residues Asn1899 and Asn1962 are each glycosylated (N-linked (GlcNAc...) asparagine). Disulfide bonds link Cys1963-Cys2016, Cys2060-Cys2119, Cys2163-Cys2213, Cys2261-Cys2313, Cys2359-Cys2411, Cys2454-Cys2506, and Cys2550-Cys2605. A glycan (N-linked (GlcNAc...) asparagine) is linked at Asn2101. Phosphotyrosine is present on Tyr2603.

The protein resides in the secreted. In terms of biological role, involved in the control of early migration of neurons expressing gonadotropin-releasing hormone (GNRH neurons). May be involved in the maintenance of osteochondroprogenitor cells pool. This Homo sapiens (Human) protein is Immunoglobulin superfamily member 10 (IGSF10).